The chain runs to 247 residues: METIIEVKNLVKNYGDKQILKNISFNINKGEIISIIGESGAGKSTLMRCLNGLEGINSGSIKFYDTDITKLKEKEKNSIKKQMAYVFQDLNIIDNMYVIENVLVPFLNRKNFIQVLFNQFSKQEYERALYCLEKVGISKLAYTKAKYLSGGEKQRVAIARSLAPNVDLILADEPISSLDEKNSTQIMEIFKRINIKKNKTIILNLHNVEIAKKFSDKILALKNGEIFFYKKSAEVNEDDIRKVYQTS.

One can recognise an ABC transporter domain in the interval 5–246 (IEVKNLVKNY…EDDIRKVYQT (242 aa)). 37–44 (GESGAGKS) serves as a coordination point for ATP.

It belongs to the ABC transporter superfamily. Phosphonates importer (TC 3.A.1.9.1) family. As to quaternary structure, the complex is composed of two ATP-binding proteins (PhnC), two transmembrane proteins (PhnE) and a solute-binding protein (PhnD).

Its subcellular location is the cell inner membrane. It carries out the reaction phosphonate(out) + ATP + H2O = phosphonate(in) + ADP + phosphate + H(+). Functionally, part of the ABC transporter complex PhnCDE involved in phosphonates import. Responsible for energy coupling to the transport system. This Fusobacterium nucleatum subsp. nucleatum (strain ATCC 25586 / DSM 15643 / BCRC 10681 / CIP 101130 / JCM 8532 / KCTC 2640 / LMG 13131 / VPI 4355) protein is Phosphonates import ATP-binding protein PhnC.